A 385-amino-acid polypeptide reads, in one-letter code: Glucans biosynthesis protein C (385 aa).

A run of 10 helical transmembrane segments spans residues 17 to 37, 60 to 80, 91 to 111, 137 to 157, 173 to 193, 212 to 232, 239 to 259, 274 to 294, 311 to 331, and 338 to 358; these read AWLM…SHTW, MQVF…RYPL, VGIP…IMLQ, ISHL…VWIF, KFSM…YAVI, FIVM…LAFI, LFTT…VAYL, TESV…FSFG, ASLF…AYIT, and WLGF…LYEI.

It belongs to the acyltransferase 3 family. OpgC subfamily.

It is found in the cell membrane. Its pathway is glycan metabolism; osmoregulated periplasmic glucan (OPG) biosynthesis. Necessary for the succinyl substitution of periplasmic glucans. Could catalyze the transfer of succinyl residues from the cytoplasmic side of the membrane to the nascent glucan backbones on the periplasmic side of the membrane. The polypeptide is Glucans biosynthesis protein C (Escherichia coli O139:H28 (strain E24377A / ETEC)).